Here is a 269-residue protein sequence, read N- to C-terminus: Auxin-responsive protein IAA26 (269 aa).

Residues 25–40 (YQEDKNNTDQEKKLEL) show a composition bias toward basic and acidic residues. 2 disordered regions span residues 25-55 (YQED…HSAI) and 76-146 (CFNG…KQVE). Positions 38-42 (LELRL) match the EAR-like (transcriptional repression) motif. Polar residues-rich tracts occupy residues 80-93 (NHFS…SVPH) and 117-136 (LAST…GQIN). The span at 137–146 (KSDDGEKQVE) shows a compositional bias: basic and acidic residues. The PB1 domain maps to 151 to 250 (GMFVKINMDG…SVKRLRVIKS (100 aa)).

It belongs to the Aux/IAA family. As to quaternary structure, homodimers and heterodimers. Interacts with phytochrome A. Interacts with TPL.

It is found in the nucleus. Aux/IAA proteins are short-lived transcriptional factors that function as repressors of early auxin response genes at low auxin concentrations. Repression is thought to result from the interaction with auxin response factors (ARFs), proteins that bind to the auxin-responsive promoter element (AuxRE). Formation of heterodimers with ARF proteins may alter their ability to modulate early auxin response genes expression. The protein is Auxin-responsive protein IAA26 (IAA26) of Arabidopsis thaliana (Mouse-ear cress).